Here is a 590-residue protein sequence, read N- to C-terminus: DNA mismatch repair protein MutL (590 aa).

Polar residues predominate over residues 335 to 351 (PLSSASPKLPESTTATA). The interval 335-354 (PLSSASPKLPESTTATAQPH) is disordered.

This sequence belongs to the DNA mismatch repair MutL/HexB family.

Its function is as follows. This protein is involved in the repair of mismatches in DNA. It is required for dam-dependent methyl-directed DNA mismatch repair. May act as a 'molecular matchmaker', a protein that promotes the formation of a stable complex between two or more DNA-binding proteins in an ATP-dependent manner without itself being part of a final effector complex. This Dichelobacter nodosus (strain VCS1703A) protein is DNA mismatch repair protein MutL.